The chain runs to 233 residues: Demethylmenaquinone methyltransferase (233 aa).

S-adenosyl-L-methionine is bound by residues threonine 60, aspartate 81, and 106–107 (DA).

This sequence belongs to the class I-like SAM-binding methyltransferase superfamily. MenG/UbiE family.

It carries out the reaction a 2-demethylmenaquinol + S-adenosyl-L-methionine = a menaquinol + S-adenosyl-L-homocysteine + H(+). It functions in the pathway quinol/quinone metabolism; menaquinone biosynthesis; menaquinol from 1,4-dihydroxy-2-naphthoate: step 2/2. In terms of biological role, methyltransferase required for the conversion of demethylmenaquinol (DMKH2) to menaquinol (MKH2). In Staphylococcus saprophyticus subsp. saprophyticus (strain ATCC 15305 / DSM 20229 / NCIMB 8711 / NCTC 7292 / S-41), this protein is Demethylmenaquinone methyltransferase.